The chain runs to 63 residues: Large ribosomal subunit protein bL32 (63 aa).

A disordered region spans residues 1–20; it reads MANPKAKMSKSRRDKRRAQF. The segment covering 7–18 has biased composition (basic residues); the sequence is KMSKSRRDKRRA.

The protein belongs to the bacterial ribosomal protein bL32 family.

This chain is Large ribosomal subunit protein bL32, found in Chlorobaculum parvum (strain DSM 263 / NCIMB 8327) (Chlorobium vibrioforme subsp. thiosulfatophilum).